Here is a 526-residue protein sequence, read N- to C-terminus: Plant intracellular Ras-group-related LRR protein 5 (526 aa).

11 LRR repeats span residues L229–L252, I253–L275, L276–R297, L298–L321, S323–C344, S346–L367, S368–M390, A391–K414, L416–N437, L438–N463, and R465–K484. Residues G485–Y492 carry the GVYW; degenerate motif.

This sequence belongs to the SHOC2 family. As to expression, widely expressed but preferentially in roots.

In terms of biological role, leucine-rich repeat protein that likely mediates protein interactions, possibly in the context of signal transduction. The protein is Plant intracellular Ras-group-related LRR protein 5 (PIRL5) of Arabidopsis thaliana (Mouse-ear cress).